The following is a 299-amino-acid chain: Nucleotide-binding protein RER_30260 (299 aa).

Residue 19 to 26 (GLSGAGLS) participates in ATP binding. Residue 70 to 73 (DVRS) participates in GTP binding.

This sequence belongs to the RapZ-like family.

Displays ATPase and GTPase activities. The chain is Nucleotide-binding protein RER_30260 from Rhodococcus erythropolis (strain PR4 / NBRC 100887).